Reading from the N-terminus, the 959-residue chain is MVFCTYCGHSFTRDEHLERHILTHTNVKPFKCFTCHMSFARRDLLQGHYTVHGRNQDQQEIPAANGMIPKSAGRTPIACSNCAKTKTKCDKKFPCSRCASRNLRCTLRPTLVSTKNAARMGLITPETIAQDIANGTLPPDQTVAAEKVPLPIAPTGHVEESSKSSSPSGSPTSISHNSTGSDAPPAPMFDQFNGCPTPPQGLSPTTPSGQGFNGPASFPGFDDYNQQIGKTSAEDCNLHFMLDWQQLQLPIGLDPMLQPDMLGDQDLNFDMGAMGLGTQMEPILSINPELTNNMPPPLITPIETPKFDRSSSDLDAFSSGLHDRQYSVVSNQSVDSHYQAPPQPDPVVVAQDGWNVFRCVPSVHPSACPSTARWNLEALESTLQNHDGRSKWRPEVDENLFDGSDQLAVMQIHESTRDKLLAITQGFLHKALEIHRGNEAAQTYAPSNFVLLPPTKVLEYFLRSYTNSFERFYPLTSKGSLDANELMFCYQDRASSLLILLMVAQGAMNVPSREARSLTGGLVETCRISLFDLIERNIVMASDHNVLHAALIFTELASWSGDKWQMDIAMGQRGMYAAMLRHSGVLDRTTYPPQGSFSDGQTNADHMWNLWIQQESRSRPVYSWAMVDQELALFHGASPLFSVTEFGIALPHNEELWRAKSAGEWTSLMGQRVSTTDSDATASPPSLRDLSRRFLDDEMDSAECFLNPMHLRLLLLPLQAMVGHYQQLMCCFSDSGSSRVKNKTVTASSTRCRLEEVQCLLQRWYNIAMDYLKEHSVCSVMQASLVLYHLISLNAVTDFVQIERLARRETFDGTYQSLVWTHKRCITDVGEAIFHCGQVISLIRSMPRSVRPPWWAASIYRVALVLWCDSLIDKDGSSSYGGKSGQTFAVDALPSDHPLIQRYLNKGEGTPRLSKRDGSTIGLDHGLTVLNHCAEIIDEGATSRFQEGIRGKLDRLMRT.

C2H2-type zinc fingers lie at residues 2-24 (VFCT…ILTH) and 30-52 (FKCF…YTVH). Positions 79–105 (CSNCAKTKTKCDKKFPCSRCASRNLRC) form a DNA-binding region, zn(2)-C6 fungal-type. The segment at 154-226 (PTGHVEESSK…SFPGFDDYNQ (73 aa)) is disordered. Positions 163 to 178 (KSSSPSGSPTSISHNS) are enriched in low complexity.

It is found in the nucleus. In terms of biological role, elsinochromes biosynthesis cluster-specific transcription factor that positively regulates the expression of cluster genes including RDT1, PKS1, PRF1 and HP1, and subsequent elsinochromes production. In Elsinoe fawcettii (Citrus scab fungus), this protein is Transcription factor 1.